Here is a 259-residue protein sequence, read N- to C-terminus: Snake venom serine protease homolog rhinocerase 3 (259 aa).

The signal sequence occupies residues 1-17 (VLIRVLANLLLLQLSYA). A propeptide spanning residues 18-23 (QESSEL) is cleaved from the precursor. Residues 24–250 (VIGGDECDIN…YTDWIEGIIA (227 aa)) form the Peptidase S1 domain. Intrachain disulfides connect C30–C164, C51–C67, C99–C257, C143–C211, C175–C190, and C201–C226. The N-linked (GlcNAc...) asparagine glycan is linked to N80. N252 is a glycosylation site (N-linked (GlcNAc...) asparagine).

The protein belongs to the peptidase S1 family. Snake venom subfamily. Expressed by the venom gland.

The protein localises to the secreted. In terms of biological role, snake venom serine protease homolog that may act in the hemostasis system of the prey. This Bitis rhinoceros (West African gaboon viper) protein is Snake venom serine protease homolog rhinocerase 3.